We begin with the raw amino-acid sequence, 565 residues long: Wee1-like protein kinase 2 (565 aa).

Disordered regions lie at residues 18-78 and 169-191; these read YCEE…KSPE and KSNG…GNVE. Acidic residues predominate over residues 19–29; sequence CEEESESEGQE. Over residues 31-51 the composition is skewed to basic and acidic residues; the sequence is WETRDAHSQIPDRAEGQESEA. Ser-76 carries the post-translational modification Phosphoserine. The Nuclear localization signal signature appears at 173 to 175; it reads KRK. Positions 214–492 constitute a Protein kinase domain; the sequence is FLEVEKIGVG…ARSRVLRPSL (279 aa). ATP contacts are provided by residues 220–228 and Lys-243; that span reads IGVGEFGTV. A Nuclear export signal motif is present at residues 317-331; sequence KLKDILLQISLGLKY. The active-site Proton acceptor is Asp-341. Asn-346 and Asp-382 together coordinate Mg(2+). Positions 495-521 form a coiled coil; the sequence is AEELQQQLNLEKFKTATLERELREAQQ. The tract at residues 521 to 565 is disordered; that stretch reads QAWFSQEERGDAGVSGTPTGSRSTKRLVGGKSAKSSSFTWGKSSP. Residues 553–565 are compositionally biased toward polar residues; sequence AKSSSFTWGKSSP.

The protein belongs to the protein kinase superfamily. Ser/Thr protein kinase family. WEE1 subfamily. Phosphorylation leads to increase its activity.

It localises to the nucleus. The catalysed reaction is L-tyrosyl-[protein] + ATP = O-phospho-L-tyrosyl-[protein] + ADP + H(+). Functionally, oocyte-specific protein tyrosine kinase that phosphorylates and inhibits CDK1 and acts as a key regulator of meiosis during both prophase I and metaphase II. Required to maintain meiotic arrest in oocytes during the germinal vesicle (GV) stage, a long period of quiescence at dictyate prophase I, by phosphorylating CDK1 at 'Tyr-15', leading to inhibit CDK1 activity and prevent meiotic reentry. Also required for metaphase II exit during egg activation by phosphorylating CDK1 at 'Tyr-15', to ensure exit from meiosis in oocytes and promote pronuclear formation. The protein is Wee1-like protein kinase 2 (WEE2) of Ailuropoda melanoleuca (Giant panda).